Reading from the N-terminus, the 192-residue chain is Anthranilate synthase component 2 (192 aa).

In terms of domain architecture, Glutamine amidotransferase type-1 spans 3-192 (DILLLDNIDS…LEQTLAWALA (190 aa)). 57–59 (GPG) serves as a coordination point for L-glutamine. Cysteine 84 (nucleophile; for GATase activity) is an active-site residue. Residues glutamine 88 and 134–135 (SL) contribute to the L-glutamine site. Residues histidine 170 and glutamate 172 each act as for GATase activity in the active site.

As to quaternary structure, heterotetramer consisting of two non-identical subunits: a beta subunit (TrpG) and a large alpha subunit (TrpE).

The catalysed reaction is chorismate + L-glutamine = anthranilate + pyruvate + L-glutamate + H(+). It participates in amino-acid biosynthesis; L-tryptophan biosynthesis; L-tryptophan from chorismate: step 1/5. In terms of biological role, part of a heterotetrameric complex that catalyzes the two-step biosynthesis of anthranilate, an intermediate in the biosynthesis of L-tryptophan. In the first step, the glutamine-binding beta subunit (TrpG) of anthranilate synthase (AS) provides the glutamine amidotransferase activity which generates ammonia as a substrate that, along with chorismate, is used in the second step, catalyzed by the large alpha subunit of AS (TrpE) to produce anthranilate. In the absence of TrpG, TrpE can synthesize anthranilate directly from chorismate and high concentrations of ammonia. The polypeptide is Anthranilate synthase component 2 (trpG) (Yersinia pestis).